Reading from the N-terminus, the 257-residue chain is UPF0246 protein YaaA (257 aa).

It belongs to the UPF0246 family.

This is UPF0246 protein YaaA from Salmonella arizonae (strain ATCC BAA-731 / CDC346-86 / RSK2980).